Consider the following 357-residue polypeptide: N-acetyl-gamma-glutamyl-phosphate reductase (357 aa).

Residue C160 is part of the active site.

This sequence belongs to the NAGSA dehydrogenase family. Type 1 subfamily.

The protein resides in the cytoplasm. It carries out the reaction N-acetyl-L-glutamate 5-semialdehyde + phosphate + NADP(+) = N-acetyl-L-glutamyl 5-phosphate + NADPH + H(+). It functions in the pathway amino-acid biosynthesis; L-arginine biosynthesis; N(2)-acetyl-L-ornithine from L-glutamate: step 3/4. Its function is as follows. Catalyzes the NADPH-dependent reduction of N-acetyl-5-glutamyl phosphate to yield N-acetyl-L-glutamate 5-semialdehyde. The chain is N-acetyl-gamma-glutamyl-phosphate reductase from Parasynechococcus marenigrum (strain WH8102).